The sequence spans 290 residues: tRNA-cytidine(32) 2-sulfurtransferase (290 aa).

The PP-loop motif motif lies at 36 to 41 (SGGKDS). Residues cysteine 111, cysteine 114, and cysteine 202 each contribute to the [4Fe-4S] cluster site. The disordered stretch occupies residues 259–290 (DPWLDAEDEEAEDCGEPAGDGVVSLGGARGGR). Over residues 262 to 273 (LDAEDEEAEDCG) the composition is skewed to acidic residues.

The protein belongs to the TtcA family. As to quaternary structure, homodimer. Requires Mg(2+) as cofactor. [4Fe-4S] cluster serves as cofactor.

The protein localises to the cytoplasm. The catalysed reaction is cytidine(32) in tRNA + S-sulfanyl-L-cysteinyl-[cysteine desulfurase] + AH2 + ATP = 2-thiocytidine(32) in tRNA + L-cysteinyl-[cysteine desulfurase] + A + AMP + diphosphate + H(+). Its pathway is tRNA modification. Catalyzes the ATP-dependent 2-thiolation of cytidine in position 32 of tRNA, to form 2-thiocytidine (s(2)C32). The sulfur atoms are provided by the cysteine/cysteine desulfurase (IscS) system. This Anaeromyxobacter dehalogenans (strain 2CP-C) protein is tRNA-cytidine(32) 2-sulfurtransferase.